The primary structure comprises 253 residues: Probable transcriptional regulatory protein KRH_13670 (253 aa).

This sequence belongs to the TACO1 family.

Its subcellular location is the cytoplasm. This chain is Probable transcriptional regulatory protein KRH_13670, found in Kocuria rhizophila (strain ATCC 9341 / DSM 348 / NBRC 103217 / DC2201).